The sequence spans 696 residues: UvrABC system protein B (696 aa).

The Helicase ATP-binding domain occupies 46 to 433 (EGVEDGLSFQ…SGQTAEQVVR (388 aa)). Residue 59–66 (GVTGSGKT) participates in ATP binding. The Beta-hairpin motif lies at 112-135 (YYDYYQPEAYVPQRDLFIEKDSSI). A Helicase C-terminal domain is found at 450–616 (QVDDVLSEIT…GVVKRIKDII (167 aa)). Residues 647–682 (AKEIKRLEKQMADYAKNLEFEKAAQTRDQLALLRER) enclose the UVR domain.

The protein belongs to the UvrB family. Forms a heterotetramer with UvrA during the search for lesions. Interacts with UvrC in an incision complex.

It is found in the cytoplasm. The UvrABC repair system catalyzes the recognition and processing of DNA lesions. A damage recognition complex composed of 2 UvrA and 2 UvrB subunits scans DNA for abnormalities. Upon binding of the UvrA(2)B(2) complex to a putative damaged site, the DNA wraps around one UvrB monomer. DNA wrap is dependent on ATP binding by UvrB and probably causes local melting of the DNA helix, facilitating insertion of UvrB beta-hairpin between the DNA strands. Then UvrB probes one DNA strand for the presence of a lesion. If a lesion is found the UvrA subunits dissociate and the UvrB-DNA preincision complex is formed. This complex is subsequently bound by UvrC and the second UvrB is released. If no lesion is found, the DNA wraps around the other UvrB subunit that will check the other stand for damage. The sequence is that of UvrABC system protein B from Burkholderia mallei (strain ATCC 23344).